The sequence spans 242 residues: Probable transcriptional regulatory protein XCC3027 (242 aa).

It belongs to the TACO1 family.

It localises to the cytoplasm. The protein is Probable transcriptional regulatory protein XCC3027 of Xanthomonas campestris pv. campestris (strain ATCC 33913 / DSM 3586 / NCPPB 528 / LMG 568 / P 25).